Here is a 135-residue protein sequence, read N- to C-terminus: UPF0102 protein Mjls_1965 (135 aa).

The protein belongs to the UPF0102 family.

The protein is UPF0102 protein Mjls_1965 of Mycobacterium sp. (strain JLS).